We begin with the raw amino-acid sequence, 238 residues long: ATP-dependent Clp protease proteolytic subunit 4 (238 aa).

Catalysis depends on Ser-113, which acts as the Nucleophile. Residue His-138 is part of the active site.

This sequence belongs to the peptidase S14 family. Fourteen ClpP subunits assemble into 2 heptameric rings which stack back to back to give a disk-like structure with a central cavity, resembling the structure of eukaryotic proteasomes.

The protein localises to the cytoplasm. The catalysed reaction is Hydrolysis of proteins to small peptides in the presence of ATP and magnesium. alpha-casein is the usual test substrate. In the absence of ATP, only oligopeptides shorter than five residues are hydrolyzed (such as succinyl-Leu-Tyr-|-NHMec, and Leu-Tyr-Leu-|-Tyr-Trp, in which cleavage of the -Tyr-|-Leu- and -Tyr-|-Trp bonds also occurs).. Cleaves peptides in various proteins in a process that requires ATP hydrolysis. Has a chymotrypsin-like activity. Plays a major role in the degradation of misfolded proteins. This chain is ATP-dependent Clp protease proteolytic subunit 4, found in Frankia casuarinae (strain DSM 45818 / CECT 9043 / HFP020203 / CcI3).